Reading from the N-terminus, the 71-residue chain is Small ribosomal subunit protein bS21 (71 aa).

Basic residues predominate over residues 50 to 59 (AAAVKRHAKK). Positions 50-71 (AAAVKRHAKKVQREQRRAVRLY) are disordered. Basic and acidic residues predominate over residues 60–71 (VQREQRRAVRLY).

The protein belongs to the bacterial ribosomal protein bS21 family.

The chain is Small ribosomal subunit protein bS21 from Pseudomonas fluorescens (strain ATCC BAA-477 / NRRL B-23932 / Pf-5).